The primary structure comprises 297 residues: Probable oxidoreductase (297 aa).

9-33 (VVTGGASGLGAETVRALAAAGAEVT) is a binding site for NAD(+). S138 contributes to the substrate binding site. Y164 functions as the Proton acceptor in the catalytic mechanism.

It belongs to the short-chain dehydrogenases/reductases (SDR) family.

This chain is Probable oxidoreductase, found in Streptomyces lividans.